The primary structure comprises 113 residues: Large ribosomal subunit protein bL19 (113 aa).

It belongs to the bacterial ribosomal protein bL19 family.

Functionally, this protein is located at the 30S-50S ribosomal subunit interface and may play a role in the structure and function of the aminoacyl-tRNA binding site. This is Large ribosomal subunit protein bL19 from Mycobacteroides abscessus (strain ATCC 19977 / DSM 44196 / CCUG 20993 / CIP 104536 / JCM 13569 / NCTC 13031 / TMC 1543 / L948) (Mycobacterium abscessus).